The primary structure comprises 175 residues: MLTSGIIVLSGGLLDPNPGLIFWTTVTFLIVLFILKKFTWGPMLSALEEREKGIKNSIDRAQSAKEEAEAVLNKNRQLLAQAGADADKIIREGKEYGDKLKAEITEKAHLEASRMISSAKDEIDQEKRRALTELRTEVADLAVKGAEKIIMANLDAEKQKNIVDSMIQELSQHRN.

A helical transmembrane segment spans residues 19–35 (GLIFWTTVTFLIVLFIL).

Belongs to the ATPase B chain family. In terms of assembly, F-type ATPases have 2 components, F(1) - the catalytic core - and F(0) - the membrane proton channel. F(1) has five subunits: alpha(3), beta(3), gamma(1), delta(1), epsilon(1). F(0) has four main subunits: a(1), b(2) and c(10-14). The alpha and beta chains form an alternating ring which encloses part of the gamma chain. F(1) is attached to F(0) by a central stalk formed by the gamma and epsilon chains, while a peripheral stalk is formed by the delta and b chains.

It localises to the cell inner membrane. In terms of biological role, f(1)F(0) ATP synthase produces ATP from ADP in the presence of a proton or sodium gradient. F-type ATPases consist of two structural domains, F(1) containing the extramembraneous catalytic core and F(0) containing the membrane proton channel, linked together by a central stalk and a peripheral stalk. During catalysis, ATP synthesis in the catalytic domain of F(1) is coupled via a rotary mechanism of the central stalk subunits to proton translocation. Functionally, component of the F(0) channel, it forms part of the peripheral stalk, linking F(1) to F(0). The polypeptide is ATP synthase subunit b (Chlorobium phaeobacteroides (strain BS1)).